The chain runs to 323 residues: Porphobilinogen deaminase (323 aa).

An S-(dipyrrolylmethanemethyl)cysteine modification is found at C251.

Belongs to the HMBS family. As to quaternary structure, monomer. Requires dipyrromethane as cofactor.

The catalysed reaction is 4 porphobilinogen + H2O = hydroxymethylbilane + 4 NH4(+). It participates in porphyrin-containing compound metabolism; protoporphyrin-IX biosynthesis; coproporphyrinogen-III from 5-aminolevulinate: step 2/4. The protein operates within porphyrin-containing compound metabolism; chlorophyll biosynthesis. In terms of biological role, tetrapolymerization of the monopyrrole PBG into the hydroxymethylbilane pre-uroporphyrinogen in several discrete steps. The sequence is that of Porphobilinogen deaminase (hemC) from Nostoc sp. (strain PCC 7120 / SAG 25.82 / UTEX 2576).